Here is a 449-residue protein sequence, read N- to C-terminus: 23S rRNA (uracil(1939)-C(5))-methyltransferase RlmD (449 aa).

One can recognise a TRAM domain in the interval 12–70; sequence SKQLSAKQSFSVHQLDHLGAGIAQHQGKVVFIPGALPNETVQAQLTEQKKNYARAKLIK. Positions 83, 89, 92, and 170 each coordinate [4Fe-4S] cluster. Residues Gln-282, Phe-311, Asn-316, Glu-332, Asp-359, and Asp-379 each contribute to the S-adenosyl-L-methionine site. Cys-405 (nucleophile) is an active-site residue.

It belongs to the class I-like SAM-binding methyltransferase superfamily. RNA M5U methyltransferase family. RlmD subfamily.

The enzyme catalyses uridine(1939) in 23S rRNA + S-adenosyl-L-methionine = 5-methyluridine(1939) in 23S rRNA + S-adenosyl-L-homocysteine + H(+). Catalyzes the formation of 5-methyl-uridine at position 1939 (m5U1939) in 23S rRNA. This Shewanella sp. (strain ANA-3) protein is 23S rRNA (uracil(1939)-C(5))-methyltransferase RlmD.